Consider the following 178-residue polypeptide: Large ribosomal subunit protein bL25 (178 aa).

It belongs to the bacterial ribosomal protein bL25 family. CTC subfamily. In terms of assembly, part of the 50S ribosomal subunit; part of the 5S rRNA/L5/L18/L25 subcomplex. Contacts the 5S rRNA. Binds to the 5S rRNA independently of L5 and L18.

In terms of biological role, this is one of the proteins that binds to the 5S RNA in the ribosome where it forms part of the central protuberance. The sequence is that of Large ribosomal subunit protein bL25 from Nitratiruptor sp. (strain SB155-2).